The sequence spans 339 residues: AT-hook motif nuclear-localized protein 26 (339 aa).

Over residues 1–12 (MDPVQSHGSQSS) the composition is skewed to polar residues. Disordered regions lie at residues 1 to 132 (MDPV…NKPK) and 273 to 339 (MQTP…RPPY). Residues 24-45 (LHLQQQQQHQQQHQQQQQQQFF) are compositionally biased toward low complexity. Over residues 82-93 (NMDNIANTNSGS) the composition is skewed to polar residues. Over residues 102–113 (GGEGGSGGGGSG) the composition is skewed to gly residues. The segment at residues 118–130 (RRPRGRPAGSKNK) is a DNA-binding region (a.T hook). A PPC domain is found at 142–279 (ANALRTHVME…EDEMQTPVQG (138 aa)). Gly residues predominate over residues 278–291 (QGGGGGGGGGGGMG). A compositionally biased stretch (low complexity) spans 292–310 (SPPMMGQQQAMAAMAAAQG).

Its subcellular location is the nucleus. Functionally, transcription factor that specifically binds AT-rich DNA sequences related to the nuclear matrix attachment regions (MARs). The polypeptide is AT-hook motif nuclear-localized protein 26 (Arabidopsis thaliana (Mouse-ear cress)).